The primary structure comprises 327 residues: Probable cell division protein WhiA (327 aa).

Residues 275–308 (SLEELGQLADPPMTKDAVAGRIRRLLSMADRRAR) constitute a DNA-binding region (H-T-H motif).

The protein belongs to the WhiA family.

In terms of biological role, involved in cell division and chromosome segregation. This chain is Probable cell division protein WhiA, found in Nocardia farcinica (strain IFM 10152).